The following is a 438-amino-acid chain: Methylenetetrahydrofolate--tRNA-(uracil-5-)-methyltransferase TrmFO (438 aa).

Residue 7 to 12 (GAGLAG) participates in FAD binding.

It belongs to the MnmG family. TrmFO subfamily. FAD serves as cofactor.

Its subcellular location is the cytoplasm. It catalyses the reaction uridine(54) in tRNA + (6R)-5,10-methylene-5,6,7,8-tetrahydrofolate + NADH + H(+) = 5-methyluridine(54) in tRNA + (6S)-5,6,7,8-tetrahydrofolate + NAD(+). The catalysed reaction is uridine(54) in tRNA + (6R)-5,10-methylene-5,6,7,8-tetrahydrofolate + NADPH + H(+) = 5-methyluridine(54) in tRNA + (6S)-5,6,7,8-tetrahydrofolate + NADP(+). Its function is as follows. Catalyzes the folate-dependent formation of 5-methyl-uridine at position 54 (M-5-U54) in all tRNAs. This chain is Methylenetetrahydrofolate--tRNA-(uracil-5-)-methyltransferase TrmFO, found in Sulfurihydrogenibium sp. (strain YO3AOP1).